Reading from the N-terminus, the 92-residue chain is Neurophysin 2 (92 aa).

Cystine bridges form between cysteine 10–cysteine 54, cysteine 13–cysteine 27, cysteine 21–cysteine 44, cysteine 28–cysteine 34, cysteine 61–cysteine 73, cysteine 67–cysteine 85, and cysteine 74–cysteine 79.

Belongs to the vasopressin/oxytocin family. There is an equilibrium between the monomeric and dimeric forms. On peptide binding the dimeric form predominates. A shorter neurophysin molecule (1-90) also exists and is probably derived from the complete protein by proteolytic degradation (in vivo or after extraction).

Its subcellular location is the secreted. In terms of biological role, neurophysin 2 specifically binds vasopressin. The chain is Neurophysin 2 (AVP) from Loxodonta africana (African elephant).